A 214-amino-acid chain; its full sequence is Large ribosomal subunit protein uL3 (214 aa).

The interval 131–153 is disordered; sequence KSQRASHGNSRSHNVPGSIGMAQ. Residues 132–145 are compositionally biased toward polar residues; it reads SQRASHGNSRSHNV. An N5-methylglutamine modification is found at Gln-153.

This sequence belongs to the universal ribosomal protein uL3 family. In terms of assembly, part of the 50S ribosomal subunit. Forms a cluster with proteins L14 and L19. In terms of processing, methylated by PrmB.

Its function is as follows. One of the primary rRNA binding proteins, it binds directly near the 3'-end of the 23S rRNA, where it nucleates assembly of the 50S subunit. The protein is Large ribosomal subunit protein uL3 of Thiobacillus denitrificans (strain ATCC 25259 / T1).